We begin with the raw amino-acid sequence, 417 residues long: MEQRPRGCAAVAAALLLVLLGARAQGGTRSPRCDCAGDFHKKIGLFCCRGCPAGHYLKAPCTEPCGNSTCLVCPQDTFLAWENHHNSECARCQACDEQASQVALENCSAVADTRCGCKPGWFVECQVSQCVSSSPFYCQPCLDCGALHRHTRLLCSRRDTDCGTCLPGFYEHGDGCVSCPTSTLGSCPERCAAVCGWRQMFWVQVLLAGLVVPLLLGATLTYTYRHCWPHKPLVTADEAGMEALTPPPATHLSPLDSAHTLLAPPDSSEKICTVQLVGNSWTPGYPETQEALCPQVTWSWDQLPSRALGPAAAPTLSPESPAGSPAMMLQPGPQLYDVMDAVPARRWKEFVRTLGLREAEIEAVEVEIGRFRDQQYEMLKRWRQQQPAGLGAVYAALERMGLDGCVEDLRSRLQRGP.

Positions 1 to 24 (MEQRPRGCAAVAAALLLVLLGARA) are cleaved as a signal peptide. Residues 25–199 (QGGTRSPRCD…RCAAVCGWRQ (175 aa)) are Extracellular-facing. 4 TNFR-Cys repeats span residues 34–71 (DCAGDFHKKIGLFCCRGCPAGHYLKAPCTEPCGNSTCL), 72–115 (VCPQ…DTRC), 116–163 (GCKP…TDCG), and 164–192 (TCLPGFYEHGDGCVSCPTSTLGSCPERCA). 12 cysteine pairs are disulfide-bonded: Cys-35–Cys-47, Cys-48–Cys-61, Cys-51–Cys-70, Cys-73–Cys-89, Cys-92–Cys-107, Cys-95–Cys-115, Cys-117–Cys-130, Cys-138–Cys-155, Cys-141–Cys-162, Cys-165–Cys-176, Cys-179–Cys-191, and Cys-187–Cys-195. Asn-67 is a glycosylation site (N-linked (GlcNAc...) asparagine). A glycan (N-linked (GlcNAc...) asparagine) is linked at Asn-106. The chain crosses the membrane as a helical span at residues 200–220 (MFWVQVLLAGLVVPLLLGATL). Topologically, residues 221–417 (TYTYRHCWPH…DLRSRLQRGP (197 aa)) are cytoplasmic. A Death domain is found at 332 to 413 (GPQLYDVMDA…GCVEDLRSRL (82 aa)). (Microbial infection) N-beta-linked (GlcNAc) arginine glycosylation is present at Arg-352.

Homodimer. Interacts strongly via the death domains with TNFRSF1 and TRADD to activate at least two distinct signaling cascades, apoptosis and NF-kappa-B signaling. Interacts with BAG4. (Microbial infection) Glycosylated at Arg-352 by enteropathogenic E.coli protein NleB1. Post-translationally, glycosylated. As to expression, abundantly expressed in thymocytes and lymphocytes. Detected in lymphocyte-rich tissues such as thymus, colon, intestine, and spleen. Also found in the prostate.

It is found in the cell membrane. Its subcellular location is the secreted. In terms of biological role, receptor for TNFSF12/APO3L/TWEAK. Interacts directly with the adapter TRADD. Mediates activation of NF-kappa-B and induces apoptosis. May play a role in regulating lymphocyte homeostasis. The chain is Tumor necrosis factor receptor superfamily member 25 (TNFRSF25) from Homo sapiens (Human).